Consider the following 222-residue polypeptide: Probable transaldolase (222 aa).

The active-site Schiff-base intermediate with substrate is the Lys-91.

This sequence belongs to the transaldolase family. Type 3B subfamily.

It localises to the cytoplasm. The enzyme catalyses D-sedoheptulose 7-phosphate + D-glyceraldehyde 3-phosphate = D-erythrose 4-phosphate + beta-D-fructose 6-phosphate. Its pathway is carbohydrate degradation; pentose phosphate pathway; D-glyceraldehyde 3-phosphate and beta-D-fructose 6-phosphate from D-ribose 5-phosphate and D-xylulose 5-phosphate (non-oxidative stage): step 2/3. Its function is as follows. Transaldolase is important for the balance of metabolites in the pentose-phosphate pathway. In Chlorobium chlorochromatii (strain CaD3), this protein is Probable transaldolase.